The chain runs to 358 residues: Myb family transcription factor APL (358 aa).

The region spanning 31–91 is the HTH myb-type domain; it reads TDPKPRLRWT…HLQKFRLGKQ (61 aa). The H-T-H motif DNA-binding region spans 62–87; that stretch reads PKTIMRVMGVKGLTLYHLKSHLQKFR. The stretch at 125–145 forms a coiled coil; sequence RNMNEMQMEVQRRLHEQLEVQ. Residues 138-143 carry the LHEQLE motif; it reads LHEQLE. Residues 313–358 are disordered; the sequence is RKSGLSGDEGNNGGKLLERPSPRRSPLSPMMNPNGGLIQGRNSPFG.

Belongs to the MYB-CC family. As to expression, expressed in shoots and roots, specifically in the developing protophloem sieve elements. Detected in phloem and/or cambium. Expressed in the phloem tissues of various organs, including leaves and cotyledons, during vegetative growth.

The protein resides in the nucleus. In terms of biological role, transcription factor required for phloem identity. Has a dual role both in promoting phloem differentiation and in repressing xylem differentiation during vascular development. Regulates the expression of the transcription factor NAC045 (AC A4VCM0). May activate the transcription of specific genes involved in phosphate uptake or assimilation. Promotes flowering through transcriptional activation of both FT and its transport machinery component, FTIP1. This is Myb family transcription factor APL from Arabidopsis thaliana (Mouse-ear cress).